We begin with the raw amino-acid sequence, 398 residues long: tRNA-specific 2-thiouridylase MnmA (398 aa).

ATP contacts are provided by residues 18–25 (AMSGGVDS) and Leu-44. Cys-112 acts as the Nucleophile in catalysis. A disulfide bridge links Cys-112 with Cys-213. Residue Gly-136 coordinates ATP. The interaction with tRNA stretch occupies residues 163 to 165 (RDQ). Cys-213 serves as the catalytic Cysteine persulfide intermediate.

Belongs to the MnmA/TRMU family.

The protein localises to the cytoplasm. The enzyme catalyses S-sulfanyl-L-cysteinyl-[protein] + uridine(34) in tRNA + AH2 + ATP = 2-thiouridine(34) in tRNA + L-cysteinyl-[protein] + A + AMP + diphosphate + H(+). Catalyzes the 2-thiolation of uridine at the wobble position (U34) of tRNA, leading to the formation of s(2)U34. The sequence is that of tRNA-specific 2-thiouridylase MnmA from Agrobacterium fabrum (strain C58 / ATCC 33970) (Agrobacterium tumefaciens (strain C58)).